Reading from the N-terminus, the 65-residue chain is Stress-associated endoplasmic reticulum protein 2 (65 aa).

The chain crosses the membrane as a helical span at residues 38-58 (GPWLLALFVFVVCGSAIFQII).

Belongs to the RAMP4 family. In terms of assembly, interacts with SEC61B, SEC61A1 and the SEC61 complex. Interacts with CANX.

It localises to the membrane. The protein localises to the endoplasmic reticulum membrane. Its function is as follows. Interacts with target proteins during their translocation into the lumen of the endoplasmic reticulum. Protects unfolded target proteins against degradation during ER stress. May facilitate glycosylation of target proteins after termination of ER stress. May modulate the use of N-glycosylation sites on target proteins. This Bos taurus (Bovine) protein is Stress-associated endoplasmic reticulum protein 2 (SERP2).